Consider the following 98-residue polypeptide: Co-chaperonin GroES (98 aa).

Belongs to the GroES chaperonin family. In terms of assembly, heptamer of 7 subunits arranged in a ring. Interacts with the chaperonin GroEL.

The protein resides in the cytoplasm. Together with the chaperonin GroEL, plays an essential role in assisting protein folding. The GroEL-GroES system forms a nano-cage that allows encapsulation of the non-native substrate proteins and provides a physical environment optimized to promote and accelerate protein folding. GroES binds to the apical surface of the GroEL ring, thereby capping the opening of the GroEL channel. The polypeptide is Co-chaperonin GroES (Coprothermobacter proteolyticus (strain ATCC 35245 / DSM 5265 / OCM 4 / BT)).